The primary structure comprises 184 residues: MNWRSERIWIELITGSRKTSNFCWACILFLGSLGFLLVGTSSYLGKNLISLLPSQQILFFPQGIVMSFYGIAGLFISSYLWCTISWNVGSGYDRFDRKEGIVCIFRWGFPGINRRIFLRFLMRDIQSIRMEVKEGLYSRRVLYMEIRGQGAIPLTRTDDNLTPREIEQKAAELAYFLRVPIELK.

A run of 2 helical transmembrane segments spans residues F22 to S42 and I57 to S77.

Belongs to the Ycf4 family.

Its subcellular location is the plastid. It localises to the chloroplast thylakoid membrane. In terms of biological role, seems to be required for the assembly of the photosystem I complex. The polypeptide is Photosystem I assembly protein Ycf4 (Chloranthus spicatus (Chulantree)).